The primary structure comprises 84 residues: Small ribosomal subunit protein bS20 (84 aa).

Belongs to the bacterial ribosomal protein bS20 family.

In terms of biological role, binds directly to 16S ribosomal RNA. The sequence is that of Small ribosomal subunit protein bS20 from Lactiplantibacillus plantarum (strain ATCC BAA-793 / NCIMB 8826 / WCFS1) (Lactobacillus plantarum).